A 1470-amino-acid polypeptide reads, in one-letter code: Roundabout homolog 2 (1470 aa).

A signal peptide spans 1–21; sequence MNPLMFTLLLLFGFLCIQIDG. The Extracellular portion of the chain corresponds to 22-863; the sequence is SRLRQEDFPP…EQITDVVKQP (842 aa). 5 consecutive Ig-like C2-type domains span residues 31-127, 133-220, 225-309, 318-413, and 422-508; these read PRIV…ASLE, DDFR…AELT, PTFL…ATLT, PQFV…LEVT, and PIIL…AVLD. C52 and C110 are oxidised to a cystine. N123 is a glycosylation site (N-linked (GlcNAc...) asparagine). Intrachain disulfides connect C154–C203, C246–C293, and C339–C395. Residue N430 is glycosylated (N-linked (GlcNAc...) asparagine). C443 and C492 are disulfide-bonded. 3 consecutive Fibronectin type-III domains span residues 528–622, 641–739, and 743–840; these read PPSK…TQDI, VVVR…TEEA, and PPQS…IGGR. N756, N786, N793, and N849 each carry an N-linked (GlcNAc...) asparagine glycan. Residues 864 to 884 form a helical membrane-spanning segment; the sequence is AFIAGIGGACWVILMGFSIWL. Residues 885 to 1470 are Cytoplasmic-facing; that stretch reads YWRRKKRKGL…GSNSQGQFTE (586 aa). Disordered stretches follow at residues 1036 to 1089, 1129 to 1159, 1190 to 1371, and 1383 to 1470; these read GFGY…LPGT, EDRVPTPPVRGVASSPAISFGQQSTATLTPS, IQSN…DCPA, and DWIN…QFTE. Residues 1144–1158 show a composition bias toward polar residues; sequence PAISFGQQSTATLTP. Phosphothreonine is present on T1157. S1159 carries the post-translational modification Phosphoserine. A compositionally biased stretch (pro residues) spans 1194–1203; that stretch reads TPPPQPPAPP. Positions 1215-1231 are enriched in acidic residues; it reads LETDVPDEDADDEEEPL. Positions 1243–1288 are enriched in polar residues; it reads TPGSSMDNLDSSVTGKAFSSSQRQRPTSPFSTDSNTSAAQNQSQRP. Residues 1315–1325 show a composition bias toward pro residues; it reads DLPPPPDPPPG. Over residues 1328–1343 the composition is skewed to polar residues; the sequence is LRQQIGLSQHSGNVEN. Residues 1413–1437 are compositionally biased toward low complexity; the sequence is SKPSFPSPGGHSSSGTSSSKGSTGP. The span at 1461–1470 shows a compositional bias: polar residues; that stretch reads GSNSQGQFTE.

Belongs to the immunoglobulin superfamily. ROBO family. As to quaternary structure, interacts with SLIT2. Expressed in embryonal spinal cord.

It localises to the membrane. Receptor for SLIT2, and probably SLIT1, which are thought to act as molecular guidance cue in cellular migration, including axonal navigation at the ventral midline of the neural tube and projection of axons to different regions during neuronal development. The chain is Roundabout homolog 2 (Robo2) from Mus musculus (Mouse).